The following is a 207-amino-acid chain: Large ribosomal subunit protein uL4 (207 aa).

Positions 49-78 (HAVKNRSAVSGGGRKPWRQKGTGRARQGSI) are disordered.

The protein belongs to the universal ribosomal protein uL4 family. As to quaternary structure, part of the 50S ribosomal subunit.

In terms of biological role, one of the primary rRNA binding proteins, this protein initially binds near the 5'-end of the 23S rRNA. It is important during the early stages of 50S assembly. It makes multiple contacts with different domains of the 23S rRNA in the assembled 50S subunit and ribosome. Its function is as follows. Forms part of the polypeptide exit tunnel. In Streptococcus equi subsp. zooepidemicus (strain H70), this protein is Large ribosomal subunit protein uL4.